Reading from the N-terminus, the 89-residue chain is Small ribosomal subunit protein uS19 (89 aa).

The protein belongs to the universal ribosomal protein uS19 family.

In terms of biological role, protein S19 forms a complex with S13 that binds strongly to the 16S ribosomal RNA. This is Small ribosomal subunit protein uS19 from Stenotrophomonas maltophilia (strain K279a).